Consider the following 429-residue polypeptide: Histidinol dehydrogenase (429 aa).

Residues tyrosine 130, glutamine 191, and asparagine 214 each coordinate NAD(+). 3 residues coordinate substrate: serine 237, glutamine 259, and histidine 262. Positions 259 and 262 each coordinate Zn(2+). Catalysis depends on proton acceptor residues glutamate 327 and histidine 328. Substrate-binding residues include histidine 328, aspartate 361, glutamate 415, and histidine 420. Aspartate 361 contributes to the Zn(2+) binding site. Residue histidine 420 coordinates Zn(2+).

The protein belongs to the histidinol dehydrogenase family. Zn(2+) is required as a cofactor.

The catalysed reaction is L-histidinol + 2 NAD(+) + H2O = L-histidine + 2 NADH + 3 H(+). It participates in amino-acid biosynthesis; L-histidine biosynthesis; L-histidine from 5-phospho-alpha-D-ribose 1-diphosphate: step 9/9. Its function is as follows. Catalyzes the sequential NAD-dependent oxidations of L-histidinol to L-histidinaldehyde and then to L-histidine. The sequence is that of Histidinol dehydrogenase from Nitrobacter winogradskyi (strain ATCC 25391 / DSM 10237 / CIP 104748 / NCIMB 11846 / Nb-255).